We begin with the raw amino-acid sequence, 181 residues long: Alkyl hydroperoxide reductase AhpD (181 aa).

Cys131 (proton donor) is an active-site residue. Cys131 and Cys134 form a disulfide bridge. Residue Cys134 is the Cysteine sulfenic acid (-SOH) intermediate of the active site.

The protein belongs to the AhpD family.

It catalyses the reaction N(6)-[(R)-dihydrolipoyl]-L-lysyl-[lipoyl-carrier protein] + a hydroperoxide = N(6)-[(R)-lipoyl]-L-lysyl-[lipoyl-carrier protein] + an alcohol + H2O. Antioxidant protein with alkyl hydroperoxidase activity. Required for the reduction of the AhpC active site cysteine residues and for the regeneration of the AhpC enzyme activity. This chain is Alkyl hydroperoxide reductase AhpD, found in Rhodopseudomonas palustris (strain BisA53).